The chain runs to 4644 residues: Cytoplasmic dynein 1 heavy chain 1 (4644 aa).

Residue S2 is modified to N-acetylserine. Residues S2–N1865 form a stem region. Coiled coils occupy residues A48 to D69, S179 to I200, A453 to A476, and T541 to A564. At S68 the chain carries Phosphoserine. Positions M446 to A701 are interaction with DYNC1I2. The interaction with DYNC1LI2 stretch occupies residues A649 to S800. N6-acetyllysine is present on K1123. Residues T1169–Q1201 are a coiled coil. The residue at position 1228 (S1228) is a Phosphoserine. Coiled-coil stretches lie at residues A1229–S1250 and R1355–F1371. AAA stretches follow at residues Y1866 to S2097, E2178 to L2450, E2554 to G2803, and V2897 to T3166. ATP-binding positions include G1904–T1911 and G2222–S2229. Residues E2389–P2409 are disordered. Residues G2593 to T2600 and G2935 to T2942 contribute to the ATP site. Coiled coils occupy residues E3187–Q3273, A3394–M3498, and E3735–Q3798. A stalk region spans residues E3187–M3498. K3478 is modified (N6-acetyllysine). 2 AAA regions span residues L3551–R3780 and A4003–T4219. The residue at position 4160 (S4160) is a Phosphoserine. N6-acetyllysine is present on K4281. Residue T4364 is modified to Phosphothreonine.

It belongs to the dynein heavy chain family. Homodimer. The cytoplasmic dynein 1 complex consists of two catalytic heavy chains (HCs) and a number of non-catalytic subunits presented by intermediate chains (ICs), light intermediate chains (LICs) and light chains (LCs); the composition seems to vary in respect to the IC, LIC and LC composition. The heavy chain homodimer serves as a scaffold for the probable homodimeric assembly of the respective non-catalytic subunits. The ICs and LICs bind directly to the HC dimer and dynein LCs assemble on the IC dimer. Interacts with DYNC1LI1; DYNC1LI1 and DYNC1LI2 bind mutually exclusive to DYNC1H1. Interacts with DYNC1LI2; DYNC1LI1 and DYNC1LI2 bind mutually exclusive to DYNC1H1. Interacts with DYNC1I2. Interacts with BICD2. Interacts with DNALI1.

The protein resides in the cytoplasm. Its subcellular location is the cytoskeleton. In terms of biological role, cytoplasmic dynein 1 acts as a motor for the intracellular retrograde motility of vesicles and organelles along microtubules. Dynein has ATPase activity; the force-producing power stroke is thought to occur on release of ADP. Plays a role in mitotic spindle assembly and metaphase plate congression. This chain is Cytoplasmic dynein 1 heavy chain 1 (Dync1h1), found in Rattus norvegicus (Rat).